A 481-amino-acid chain; its full sequence is MNSAYHSPDMSQRIPGPAYSSSAPPPPIHTYQQHQHPPPPLPPPSQHHHSSHPPLPPPPSAPHPHHQHPPPPPPSHSLSSHQHHSQPPHHQSQLPPYAPAPYQQPQPSQYPRPHPHQQHAPSPSQHDEPPPPPPFSGPSPTDHQKDSEYVPPSYSKIEEGSGWKYSLDVKQQPVRARMCGFGDKDRRPITPPPCVRLVIINTETGKEVDYNSLDHAMFVLSVDLWNHDGTKEVNLVRSSTGTGAMASSSTYTYSSLEPGTPSYQQQSLPPSRESGYGQSQGLNYGQDYPPPVQQSYGQAPSYPPSSSYGPPQQYYPRHSGYSAEPSAPPPGAPFRNGYGQDQNALTRMAVVGGQPQGMFTRNLIGSLAASAFRLEDTEGQSGIWFVLQDLSVRTEGTFRLRFSFVNVGRPGGQGTNVNQGRAPILSSCYSESFHVYSAKKFPGVCESTPLSKKFANQGIKIPIRKDANIKGEGDEEMYDQN.

Disordered regions lie at residues 1 to 157 (MNSA…YSKI) and 241 to 339 (GTGA…NGYG). 3 stretches are compositionally biased toward pro residues: residues 36–45 (HPPPPLPPPS), 53–62 (PPLPPPPSAP), and 96–112 (PYAP…QYPR). The region spanning 160 to 464 (GSGWKYSLDV…ANQGIKIPIR (305 aa)) is the Velvet domain. 2 stretches are compositionally biased toward low complexity: residues 241–255 (GTGA…TYSS) and 293–325 (QQSY…SAEP).

This sequence belongs to the velvet family. VelB subfamily. Component of the heterotrimeric velvet complex composed of laeA, veA and velB; VeA acting as a bridging protein between laeA and velB. Forms a heterodimeric complex with vosA; the formation of the velB-vosA complex is light-dependent.

The protein resides in the nucleus. Its subcellular location is the cytoplasm. Component of the velvet transcription factor complex that controls sexual/asexual developmental ratio in response to light, promoting sexual development in the darkness while stimulating asexual sporulation under illumination. The velvet complex acts as a global regulator for secondary metabolite gene expression. Component of the velB-VosA heterodimeric complex that plays a dual role in activating genes associated with spore maturation and repressing certain development-associated genes. The velB-VosA complex binds DNA through the DNA-binding domain of vosA that recognizes an 11-nucleotide consensus sequence 5'-CTGGCCGCGGC-3' consisting of two motifs in the promoters of key developmental regulatory genes. Controls the biosynthetic gene cluster for beauvericin, a depsipeptide mycotoxin that functions as a virulence determinant. Also regulates chromatin structure and transcription of siderophore biosynthetic genes and is required for infection of tomato plants. This is Velvet complex subunit B from Fusarium oxysporum f. sp. lycopersici (strain 4287 / CBS 123668 / FGSC 9935 / NRRL 34936) (Fusarium vascular wilt of tomato).